A 314-amino-acid chain; its full sequence is ATP synthase gamma chain (314 aa).

The protein belongs to the ATPase gamma chain family. As to quaternary structure, F-type ATPases have 2 components, CF(1) - the catalytic core - and CF(0) - the membrane proton channel. CF(1) has five subunits: alpha(3), beta(3), gamma(1), delta(1), epsilon(1). CF(0) has three main subunits: a, b and c.

The protein resides in the cellular thylakoid membrane. Produces ATP from ADP in the presence of a proton gradient across the membrane. The gamma chain is believed to be important in regulating ATPase activity and the flow of protons through the CF(0) complex. The sequence is that of ATP synthase gamma chain from Picosynechococcus sp. (strain ATCC 27264 / PCC 7002 / PR-6) (Agmenellum quadruplicatum).